The primary structure comprises 295 residues: 4-hydroxy-tetrahydrodipicolinate synthase (295 aa).

Pyruvate is bound at residue Thr46. Tyr135 functions as the Proton donor/acceptor in the catalytic mechanism. Lys164 (schiff-base intermediate with substrate) is an active-site residue. Ile205 contributes to the pyruvate binding site.

The protein belongs to the DapA family. As to quaternary structure, homotetramer; dimer of dimers.

The protein resides in the cytoplasm. It carries out the reaction L-aspartate 4-semialdehyde + pyruvate = (2S,4S)-4-hydroxy-2,3,4,5-tetrahydrodipicolinate + H2O + H(+). It functions in the pathway amino-acid biosynthesis; L-lysine biosynthesis via DAP pathway; (S)-tetrahydrodipicolinate from L-aspartate: step 3/4. Functionally, catalyzes the condensation of (S)-aspartate-beta-semialdehyde [(S)-ASA] and pyruvate to 4-hydroxy-tetrahydrodipicolinate (HTPA). In Wolinella succinogenes (strain ATCC 29543 / DSM 1740 / CCUG 13145 / JCM 31913 / LMG 7466 / NCTC 11488 / FDC 602W) (Vibrio succinogenes), this protein is 4-hydroxy-tetrahydrodipicolinate synthase.